The sequence spans 546 residues: Crossover junction endonuclease EME1A (546 aa).

2 disordered regions span residues 1–55 (MSDF…FLDE) and 88–232 (VISL…REKQ). A compositionally biased stretch (polar residues) spans 28-49 (PTDLNLDTEPSLQKQPPGSAST). Composition is skewed to basic and acidic residues over residues 103–120 (SSKK…KPCR) and 149–167 (DAIE…VEKM). Over residues 173–183 (TITSKSTSLSA) the composition is skewed to polar residues. Residues 188 to 245 (KKKMSKDEKTRAAEEKKLQKEQEKLQKAASKAEDAEHKKLEREKQKWAKEKDKALKCI) are a coiled coil. Residues 192-232 (SKDEKTRAAEEKKLQKEQEKLQKAASKAEDAEHKKLEREKQ) show a composition bias toward basic and acidic residues. One can recognise an ERCC4 domain in the interval 278-478 (NPIQRSIVWT…PSLKSLLKVY (201 aa)).

The protein belongs to the EME1/MMS4 family. As to quaternary structure, forms a heterodimer with MUS81. Mg(2+) is required as a cofactor. Requires Ca(2+) as cofactor.

The protein resides in the nucleus. Interacts with MUS81 to form a DNA structure-specific endonuclease with substrate preference for branched DNA structures with a 5'-end at the branch nick. Typical substrates include 3'-flap structures, D-loops, replication forks, nicked Holliday junctions and also intact Holliday junctions with a reduced efficiency. May be required in mitosis for the processing of stalled or collapsed replication fork intermediates. Plays a role in DNA repair and in genotoxic stress-induced homologous recombination (HR) in somatic cells. Mediates a subset of meiotic recombination events that are insensitive to crossover interference. The polypeptide is Crossover junction endonuclease EME1A (EME1A) (Arabidopsis thaliana (Mouse-ear cress)).